The following is a 391-amino-acid chain: 3-ketoacyl-CoA thiolase (391 aa).

Cys95 acts as the Acyl-thioester intermediate in catalysis. Catalysis depends on proton acceptor residues His347 and Cys377.

This sequence belongs to the thiolase-like superfamily. Thiolase family. Heterotetramer of two alpha chains (FadB) and two beta chains (FadA).

Its subcellular location is the cytoplasm. The catalysed reaction is an acyl-CoA + acetyl-CoA = a 3-oxoacyl-CoA + CoA. It participates in lipid metabolism; fatty acid beta-oxidation. In terms of biological role, catalyzes the final step of fatty acid oxidation in which acetyl-CoA is released and the CoA ester of a fatty acid two carbons shorter is formed. In Ectopseudomonas oleovorans (Pseudomonas oleovorans), this protein is 3-ketoacyl-CoA thiolase.